The chain runs to 356 residues: Poly(rC)-binding protein 1 (356 aa).

N-acetylmethionine is present on Met-1. KH domains follow at residues 13-75 (TLTI…FAMI) and 97-162 (PVTL…VKQI). Lys-115 participates in a covalent cross-link: Glycyl lysine isopeptide (Lys-Gly) (interchain with G-Cter in SUMO2). A phosphoserine mark is found at Ser-173, Ser-189, Ser-190, Ser-246, Ser-264, and Ser-273. Residues 279-343 (QTTHELTIPN…ASISLAQYLI (65 aa)) form the KH 3 domain.

Phosphorylated; lowers poly(rC)-binding activity.

Its subcellular location is the nucleus. The protein localises to the cytoplasm. Its function is as follows. Single-stranded nucleic acid binding protein that binds preferentially to oligo dC. Together with PCBP2, required for erythropoiesis, possibly by regulating mRNA splicing. The protein is Poly(rC)-binding protein 1 (PCBP1) of Bos taurus (Bovine).